A 227-amino-acid chain; its full sequence is PKHD-type hydroxylase Bphyt_7102 (227 aa).

Residues 80–179 enclose the Fe2OG dioxygenase domain; sequence QVYPPLFNRY…RIASFFWVQS (100 aa). Positions 98, 100, and 160 each coordinate Fe cation. R170 lines the 2-oxoglutarate pocket.

It depends on Fe(2+) as a cofactor. Requires L-ascorbate as cofactor.

The sequence is that of PKHD-type hydroxylase Bphyt_7102 from Paraburkholderia phytofirmans (strain DSM 17436 / LMG 22146 / PsJN) (Burkholderia phytofirmans).